The sequence spans 371 residues: Zinc finger CCCH domain-containing protein 21 (371 aa).

A disordered region spans residues Met1 to Lys64. Residues Asp10–Phe23 are compositionally biased toward basic and acidic residues. The span at Val34–Gln46 shows a compositional bias: polar residues. C3H1-type zinc fingers lie at residues Asp88–Asn115 and Lys159–Pro197. 2 coiled-coil regions span residues Gln205–Met237 and Phe283–Lys317. The interval Cys290–Ser371 is disordered. Positions Glu292 to Glu312 are enriched in basic and acidic residues. Acidic residues predominate over residues Asn330 to Glu352.

In Arabidopsis thaliana (Mouse-ear cress), this protein is Zinc finger CCCH domain-containing protein 21.